Here is a 320-residue protein sequence, read N- to C-terminus: Mechanosensory protein 3 (320 aa).

LIM zinc-binding domains are found at residues 29-79 (CNCC…CSQH) and 89-145 (CAGC…CMTH). Positions 216–275 (RRGPRTTIKQNQLDVLNEMFSNTPKPSKHARAKKALETGLSMRVIQVWFQNRRSKERRLK) form a DNA-binding region, homeobox.

It localises to the nucleus. Its function is as follows. Specifies differentiation of the set of six touch receptor neurons. Binds cooperatively as a heterodimer with unc-86 to sites in the mec-3 gene promoter. The polypeptide is Mechanosensory protein 3 (mec-3) (Caenorhabditis remanei (Caenorhabditis vulgaris)).